The following is a 311-amino-acid chain: MGAPDSRVVRQHLLDLQSGIVAVLERFDGGRFREDAWQRPAGGGGITRVIEEGRFFERGGVNFSHVIGGAMPASATAHRPDLAGRTFEAMGVSLVLHPRNPYCPTVHMNVRFFIASHPEAAVPPPAAAPVWWFGGGMDLTPYYPYEEDVRNFHRACRAAVLPWGGEPEYRRLKEWCDRYFFLKHRNEPRGVGGLFFDDLGADGKTDFDAAFGLARSVGDAFLDAYLPIIERRRDVAYGERERDFQAYRRGRYVEFNLVFDRGTLFGLQSGGRTESILMSLPPVVKWRYDWQPEPGSAEARLYDEFLAPRDW.

S93 contributes to the substrate binding site. A divalent metal cation-binding residues include H97 and H107. Residue H107 is the Proton donor of the active site. 109-111 is a binding site for substrate; that stretch reads NVR. Positions 153 and 184 each coordinate a divalent metal cation. The interval 252–287 is important for dimerization; the sequence is YVEFNLVFDRGTLFGLQSGGRTESILMSLPPVVKWR. 270-272 lines the substrate pocket; that stretch reads GGR.

The protein belongs to the aerobic coproporphyrinogen-III oxidase family. In terms of assembly, homodimer. It depends on a divalent metal cation as a cofactor.

Its subcellular location is the cytoplasm. It carries out the reaction coproporphyrinogen III + O2 + 2 H(+) = protoporphyrinogen IX + 2 CO2 + 2 H2O. Its pathway is porphyrin-containing compound metabolism; protoporphyrin-IX biosynthesis; protoporphyrinogen-IX from coproporphyrinogen-III (O2 route): step 1/1. Functionally, involved in the heme biosynthesis. Catalyzes the aerobic oxidative decarboxylation of propionate groups of rings A and B of coproporphyrinogen-III to yield the vinyl groups in protoporphyrinogen-IX. This is Oxygen-dependent coproporphyrinogen-III oxidase from Aromatoleum aromaticum (strain DSM 19018 / LMG 30748 / EbN1) (Azoarcus sp. (strain EbN1)).